The chain runs to 307 residues: Myoblast determination protein 1 homolog (307 aa).

A bHLH domain is found at 109–160; sequence DRRKAATLRERRRLSKVNEAFETLKRCTNTNPNQRLPKVEILRNAISYIESL. The disordered stretch occupies residues 271–307; it reads TATSSGPPPVDGRGSPGPLQASSPRSSREPNLIYQVL.

Efficient DNA binding requires dimerization with another bHLH protein. In terms of tissue distribution, expressed in fast and myotomal muscle. Very weak expression in brain, skin and gonads.

The protein localises to the nucleus. May act as a transcriptional activator that promotes transcription of muscle-specific target genes and plays a role in muscle differentiation. The protein is Myoblast determination protein 1 homolog (myod) of Takifugu rubripes (Japanese pufferfish).